We begin with the raw amino-acid sequence, 501 residues long: ATP synthase subunit beta (501 aa).

153 to 160 (GGAGVGKT) contributes to the ATP binding site.

Belongs to the ATPase alpha/beta chains family. F-type ATPases have 2 components, CF(1) - the catalytic core - and CF(0) - the membrane proton channel. CF(1) has five subunits: alpha(3), beta(3), gamma(1), delta(1), epsilon(1). CF(0) has three main subunits: a(1), b(2) and c(9-12). The alpha and beta chains form an alternating ring which encloses part of the gamma chain. CF(1) is attached to CF(0) by a central stalk formed by the gamma and epsilon chains, while a peripheral stalk is formed by the delta and b chains.

The protein localises to the cell inner membrane. It carries out the reaction ATP + H2O + 4 H(+)(in) = ADP + phosphate + 5 H(+)(out). Produces ATP from ADP in the presence of a proton gradient across the membrane. The catalytic sites are hosted primarily by the beta subunits. In Cytophaga hutchinsonii (strain ATCC 33406 / DSM 1761 / CIP 103989 / NBRC 15051 / NCIMB 9469 / D465), this protein is ATP synthase subunit beta.